We begin with the raw amino-acid sequence, 881 residues long: Alanine--tRNA ligase (881 aa).

4 residues coordinate Zn(2+): H566, H570, C668, and H672.

This sequence belongs to the class-II aminoacyl-tRNA synthetase family. The cofactor is Zn(2+).

The protein localises to the cytoplasm. It carries out the reaction tRNA(Ala) + L-alanine + ATP = L-alanyl-tRNA(Ala) + AMP + diphosphate. Catalyzes the attachment of alanine to tRNA(Ala) in a two-step reaction: alanine is first activated by ATP to form Ala-AMP and then transferred to the acceptor end of tRNA(Ala). Also edits incorrectly charged Ser-tRNA(Ala) and Gly-tRNA(Ala) via its editing domain. The sequence is that of Alanine--tRNA ligase from Frankia alni (strain DSM 45986 / CECT 9034 / ACN14a).